The chain runs to 454 residues: Epsin-1 (454 aa).

Residues 11–143 (NLVKGYSSTQ…SDDERLNEER (133 aa)) form the ENTH domain. Disordered stretches follow at residues 142–195 (ERNM…EDYE) and 292–350 (YLAS…GNQS). A compositionally biased stretch (basic residues) spans 149 to 160 (GRNRKGRRRRGT). Threonine 160 is subject to Phosphothreonine. Residue serine 163 is modified to Phosphoserine. UIM domains follow at residues 165–184 (ENDD…AEED) and 189–208 (KQDE…EELK). At threonine 180 the chain carries Phosphothreonine. Basic and acidic residues predominate over residues 180-191 (TAEEDERRRKQD). The segment covering 292–302 (YLASMQQQQQA) has biased composition (low complexity). 2 stretches are compositionally biased toward polar residues: residues 303-329 (MSNN…ASSP) and 340-350 (PLIQNRTGNQS). Serine 328 is subject to Phosphoserine. Residue lysine 357 forms a Glycyl lysine isopeptide (Lys-Gly) (interchain with G-Cter in ubiquitin) linkage. Phosphothreonine occurs at positions 364, 366, 384, 386, and 388. Over residues 384–398 (TKTGTFINSQGTGYR) the composition is skewed to polar residues. Positions 384–405 (TKTGTFINSQGTGYRQVSDDPN) are disordered. Phosphothreonine; by PRK1 is present on residues threonine 395 and threonine 415. Residues 418–428 (PSTSVVPTQTG) are compositionally biased toward polar residues. The segment at 418–454 (PSTSVVPTQTGYGFGNQSQQQSQNNGSNNRGYTLIDL) is disordered. A compositionally biased stretch (low complexity) spans 432–446 (GNQSQQQSQNNGSNN). Positions 447 to 454 (RGYTLIDL) are clathrin-binding.

It belongs to the epsin family. As to quaternary structure, interacts with EDE1 and PAN1.

Its subcellular location is the cytoplasm. It is found in the membrane. Binds to membranes enriched in phosphatidylinositol 3,5-bisphosphate (PtdIns(3,5)P2) and phosphatidylinositol 4,5-bisphosphate (PtdIns(4,5)P2). Required for endocytosis and localization of actin. Negatively regulated via phosphorylation. The protein is Epsin-1 (ENT1) of Saccharomyces cerevisiae (strain ATCC 204508 / S288c) (Baker's yeast).